The sequence spans 196 residues: Pyridoxal 5'-phosphate synthase subunit PdxT (196 aa).

47-49 (GES) serves as a coordination point for L-glutamine. Cys-79 (nucleophile) is an active-site residue. Residues Arg-106 and 134 to 135 (IR) each bind L-glutamine. Catalysis depends on charge relay system residues His-170 and Glu-172.

The protein belongs to the glutaminase PdxT/SNO family. In the presence of PdxS, forms a dodecamer of heterodimers. Only shows activity in the heterodimer.

The enzyme catalyses aldehydo-D-ribose 5-phosphate + D-glyceraldehyde 3-phosphate + L-glutamine = pyridoxal 5'-phosphate + L-glutamate + phosphate + 3 H2O + H(+). It catalyses the reaction L-glutamine + H2O = L-glutamate + NH4(+). Its pathway is cofactor biosynthesis; pyridoxal 5'-phosphate biosynthesis. Its function is as follows. Catalyzes the hydrolysis of glutamine to glutamate and ammonia as part of the biosynthesis of pyridoxal 5'-phosphate. The resulting ammonia molecule is channeled to the active site of PdxS. The polypeptide is Pyridoxal 5'-phosphate synthase subunit PdxT (Bacillus subtilis (strain 168)).